The sequence spans 685 residues: DNA-directed RNA polymerase subunit beta' (685 aa).

Cysteine 69, cysteine 71, cysteine 87, and cysteine 90 together coordinate Zn(2+). Aspartate 489, aspartate 491, and aspartate 493 together coordinate Mg(2+).

This sequence belongs to the RNA polymerase beta' chain family. RpoC1 subfamily. In plastids the minimal PEP RNA polymerase catalytic core is composed of four subunits: alpha, beta, beta', and beta''. When a (nuclear-encoded) sigma factor is associated with the core the holoenzyme is formed, which can initiate transcription. The cofactor is Mg(2+). Zn(2+) is required as a cofactor.

It is found in the plastid. The protein localises to the chloroplast. The catalysed reaction is RNA(n) + a ribonucleoside 5'-triphosphate = RNA(n+1) + diphosphate. DNA-dependent RNA polymerase catalyzes the transcription of DNA into RNA using the four ribonucleoside triphosphates as substrates. The polypeptide is DNA-directed RNA polymerase subunit beta' (Gossypium hirsutum (Upland cotton)).